We begin with the raw amino-acid sequence, 1137 residues long: Nonsense-mediated mRNA decay factor SMG7 (1137 aa).

Ser2 carries the post-translational modification N-acetylserine. 2 TPR repeats span residues Gln152–Asn185 and Gln187–Phe219. At Ser520 the chain carries Phosphoserine. Residues Glu620–Lys631 are compositionally biased toward basic and acidic residues. 6 disordered regions span residues Glu620–Phe646, Leu696–Ala794, Ile890–Met911, Pro988–Gly1055, Ser1069–Glu1089, and Ser1104–His1137. At Thr624 the chain carries Phosphothreonine. Composition is skewed to polar residues over residues Pro633–Phe646 and Leu696–Arg722. The segment covering Pro723 to Ser770 has biased composition (low complexity). Phosphoserine occurs at positions 781 and 897. Over residues Pro988–Thr998 the composition is skewed to polar residues. Residues Pro999 to Pro1025 are compositionally biased toward low complexity. The span at Asp1036 to Lys1050 shows a compositional bias: basic and acidic residues. Polar residues predominate over residues Ser1069 to Trp1081. Positions Gln1117 to Gly1131 are enriched in low complexity.

In terms of assembly, part of a complex that contains SMG5, SMG7, PPP2CA, a short isoform of UPF3A (isoform UPF3AS, but not isoform UPF3AL) and phosphorylated UPF1. Interacts with DHX34; the interaction is RNA-independent.

The protein localises to the cytoplasm. Its subcellular location is the nucleus. Its function is as follows. Plays a role in nonsense-mediated mRNA decay. Recruits UPF1 to cytoplasmic mRNA decay bodies. Together with SMG5 is thought to provide a link to the mRNA degradation machinery involving exonucleolytic pathways, and to serve as an adapter for UPF1 to protein phosphatase 2A (PP2A), thereby triggering UPF1 dephosphorylation. The sequence is that of Nonsense-mediated mRNA decay factor SMG7 from Homo sapiens (Human).